The chain runs to 188 residues: MEARFTRGKSALLERALARPRTEVSLSAFALLFSELVQHCQSRVFTVAELQARLAALGRQVGARVLDALVAREKGARRETKVLGALLFVKGAVWKALFGKEADKLEQANDDARTFYIIEREPLINTYISVPKENSTLNCASFTAGIVEAVLTHSGFPAKVTAHWHKGTTLMIKFEEAVIARDRALEGR.

Residue serine 10 is modified to Phosphoserine.

It belongs to the TRAPP small subunits family. BET3 subfamily. In terms of assembly, component of the multisubunit TRAPP (transport protein particle) complex, which includes at least TRAPPC2, TRAPPC2L, TRAPPC3, TRAPPC3L, TRAPPC4, TRAPPC5, TRAPPC8, TRAPPC9, TRAPPC10, TRAPPC11 and TRAPPC12.

Its subcellular location is the golgi apparatus. It localises to the cis-Golgi network. The protein resides in the endoplasmic reticulum. Functionally, may play a role in vesicular transport from endoplasmic reticulum to Golgi. The polypeptide is Trafficking protein particle complex subunit 5 (TRAPPC5) (Bos taurus (Bovine)).